Reading from the N-terminus, the 231-residue chain is Very-long-chain (3R)-3-hydroxyacyl-CoA dehydratase 4 (231 aa).

Topologically, residues 1–19 (MGPVALPTWLQPRYRKNAY) are cytoplasmic. Residues 20-40 (LFIYYLIQFCGHSWIFTNMTV) traverse the membrane as a helical segment. The Lumenal portion of the chain corresponds to 41–56 (RFFSFGKDSMVDTFYA). Residues 57-77 (IGLVMQLCQSISLLELLHIYV) form a helical membrane-spanning segment. At 78–112 (GIESNHLLPRILQLTERIIVLFMVITSQEEVQEKY) the chain is on the cytoplasmic side. The chain crosses the membrane as a helical span at residues 113-133 (VVCVLFIFRNLLDMVRYTYSM). At 134 to 135 (LS) the chain is on the lumenal side. A helical transmembrane segment spans residues 136-156 (VIGISYAVLTWFSQTLWMPIY). Tyr-156 is a catalytic residue. Residue Pro-157 is a topological domain, cytoplasmic. Residues 158-178 (LCVLAEAFTIYQSLPYFESFG) traverse the membrane as a helical segment. Glu-163 is an active-site residue. At 179 to 189 (TYSTKLPFDLS) the chain is on the lumenal side. Residues 190–210 (FYFPYVLKIYLMMLFVGMYFT) form a helical membrane-spanning segment. Residues 211 to 231 (YNHLYSERRDILRVFPNKKKM) are Cytoplasmic-facing.

This sequence belongs to the very long-chain fatty acids dehydratase HACD family. As to quaternary structure, may interact with enzymes of the ELO family (including ELOVL1); with those enzymes that mediate condensation, the first of the four steps of the reaction cycle responsible for fatty acids elongation, may be part of a larger fatty acids elongase complex.

The protein resides in the endoplasmic reticulum membrane. It catalyses the reaction a very-long-chain (3R)-3-hydroxyacyl-CoA = a very-long-chain (2E)-enoyl-CoA + H2O. It carries out the reaction (3R)-hydroxyhexadecanoyl-CoA = (2E)-hexadecenoyl-CoA + H2O. It functions in the pathway lipid metabolism; fatty acid biosynthesis. Its function is as follows. Catalyzes the third of the four reactions of the long-chain fatty acids elongation cycle. This endoplasmic reticulum-bound enzymatic process, allows the addition of two carbons to the chain of long- and very long-chain fatty acids/VLCFAs per cycle. This enzyme catalyzes the dehydration of the 3-hydroxyacyl-CoA intermediate into trans-2,3-enoyl-CoA, within each cycle of fatty acid elongation. Thereby, it participates in the production of VLCFAs of different chain lengths that are involved in multiple biological processes as precursors of membrane lipids and lipid mediators. In Bos taurus (Bovine), this protein is Very-long-chain (3R)-3-hydroxyacyl-CoA dehydratase 4.